Consider the following 396-residue polypeptide: Elongation factor Tu (396 aa).

Residues 10 to 206 (KPHVNIGTIG…AVDEYIPDPV (197 aa)) enclose the tr-type G domain. The tract at residues 19–26 (GHVDHGKT) is G1. 19-26 (GHVDHGKT) contributes to the GTP binding site. Residue T26 participates in Mg(2+) binding. Residues 62-66 (GITIN) form a G2 region. Residues 83–86 (DAPG) are G3. GTP is bound by residues 83–87 (DAPGH) and 138–141 (NKSD). The G4 stretch occupies residues 138–141 (NKSD). The G5 stretch occupies residues 176–178 (SGL).

The protein belongs to the TRAFAC class translation factor GTPase superfamily. Classic translation factor GTPase family. EF-Tu/EF-1A subfamily. In terms of assembly, monomer.

Its subcellular location is the cytoplasm. It carries out the reaction GTP + H2O = GDP + phosphate + H(+). Its function is as follows. GTP hydrolase that promotes the GTP-dependent binding of aminoacyl-tRNA to the A-site of ribosomes during protein biosynthesis. The protein is Elongation factor Tu of Micrococcus luteus (strain ATCC 4698 / DSM 20030 / JCM 1464 / CCM 169 / CCUG 5858 / IAM 1056 / NBRC 3333 / NCIMB 9278 / NCTC 2665 / VKM Ac-2230) (Micrococcus lysodeikticus).